The chain runs to 384 residues: MASSLKKLISSFLLVLYSTTIIVASSESRCRRFKSIISFGDSIADTGNYLHLSDVNHLPQSAFLPYGESFFHPPSGRASNGRLIIDFIAEFLGLPYVPPYFGSQNVSFEQGINFAVYGATALDRAFLLGKGIESDFTNVSLSVQLDTFKQILPNLCASSTRDCKEMLGDSLILMGEIGGNDYNYPFFEGKSINEIKELVPLIVKAISSAIVDLIDLGGKTFLVPGGFPTGCSAAYLTLFQTVAEKDQDPLTGCYPLLNEFGEHHNEQLKTELKRLQKFYPHVNIIYADYHNSLYRFYQEPAKYGFKNKPLAACCGVGGKYNFTIGKECGYEGVNYCQNPSEYVNWDGYHLTEAAYQKMTEGILNGPYATPAFDWSCLGSGTVDT.

The first 24 residues, 1–24, serve as a signal peptide directing secretion; it reads MASSLKKLISSFLLVLYSTTIIVA. Ser42 functions as the Nucleophile in the catalytic mechanism. Asn105, Asn138, and Asn321 each carry an N-linked (GlcNAc...) asparagine glycan. Residues Asp346 and His349 contribute to the active site.

The protein belongs to the 'GDSL' lipolytic enzyme family.

The protein localises to the secreted. This is GDSL esterase/lipase At1g28670 from Arabidopsis thaliana (Mouse-ear cress).